Consider the following 161-residue polypeptide: Transcriptional repressor NrdR (161 aa).

The span at 1-11 (MRCPSCNSLDT) shows a compositional bias: polar residues. The segment at 1-20 (MRCPSCNSLDTQVKDSRPTE) is disordered. A zinc finger spans residues 3–34 (CPSCNSLDTQVKDSRPTEDSSVIRRRRVCVTC). Positions 49 to 139 (LTVIKRNGRR…VYRNFREAKD (91 aa)) constitute an ATP-cone domain.

Belongs to the NrdR family. Requires Zn(2+) as cofactor.

Negatively regulates transcription of bacterial ribonucleotide reductase nrd genes and operons by binding to NrdR-boxes. In Bradyrhizobium sp. (strain ORS 278), this protein is Transcriptional repressor NrdR.